A 277-amino-acid chain; its full sequence is Urease accessory protein UreD (277 aa).

It belongs to the UreD family. In terms of assembly, ureD, UreF and UreG form a complex that acts as a GTP-hydrolysis-dependent molecular chaperone, activating the urease apoprotein by helping to assemble the nickel containing metallocenter of UreC. The UreE protein probably delivers the nickel.

Its subcellular location is the cytoplasm. In terms of biological role, required for maturation of urease via the functional incorporation of the urease nickel metallocenter. This chain is Urease accessory protein UreD, found in Yersinia pestis (strain Pestoides F).